Here is a 164-residue protein sequence, read N- to C-terminus: Interferon gamma (164 aa).

A signal peptide spans 1 to 19 (MTCQTYNLFVLSVIMIYYG). 2 N-linked (GlcNAc...) asparagine glycosylation sites follow: Asn-42 and Asn-61.

This sequence belongs to the type II (or gamma) interferon family. In terms of assembly, homodimer.

The protein resides in the secreted. Produced by lymphocytes activated by specific antigens or mitogens. IFN-gamma, in addition to having antiviral activity, has important immunoregulatory functions. It is a potent activator of macrophages, it has antiproliferative effects on transformed cells and it can potentiate the antiviral and antitumor effects of the type I interferons. This chain is Interferon gamma (IFNG), found in Numida meleagris (Helmeted guineafowl).